The sequence spans 2565 residues: Transformation/transcription domain-associated protein (2565 aa).

3 positions are modified to phosphoserine: serine 328, serine 749, and serine 775. Positions 710-1087 are interaction with TP53; it reads SEVVIKWELQ…SPMAANQTPT (378 aa). The short motif at 745 to 760 is the Bipartite nuclear localization signal element; it reads KRGLSVDSAQEVKRFR. Lysine 1242 is covalently cross-linked (Glycyl lysine isopeptide (Lys-Gly) (interchain with G-Cter in SUMO2)). Over residues 1242–1253 the composition is skewed to basic and acidic residues; sequence KQEPRERENSES. The segment at 1242–1277 is disordered; it reads KQEPRERENSESKEEDVEIDIELAPGDQTSTPKTKE. Residues 1391–1963 form the FAT domain; sequence VLKYLGKTHN…YFPIRTLYLT (573 aa). Residue lysine 1766 is modified to N6-acetyllysine. A disordered region spans residues 1973–1995; it reads KSDSGQQQPSSAGNQSHSASDPG. A compositionally biased stretch (polar residues) spans 1975-1991; sequence DSGQQQPSSAGNQSHSA. Residues 2206–2529 enclose the PI3K/PI4K catalytic domain; the sequence is MPRVEIVQKH…AVTAIMTRLH (324 aa). The tract at residues 2212–2218 is G-loop; it reads VQKHNTA. Residues 2393-2401 form a catalytic loop region; sequence HLNRLNPEM. The interval 2413–2438 is activation loop; that stretch reads VAYFRFDINDATGDLDANRPVPFRLT. Residues 2533–2565 enclose the FATC domain; the sequence is QFDGGESKVNTLVAAANSLDNLCRMDPAWHPWL.

It belongs to the PI3/PI4-kinase family. TRA1 subfamily. As to quaternary structure, interacts with MYC, E2F1 and E2F4 transcription factors. Interacts directly with p53/TP53. Interacts with GCN5L2. Component of various HAT complexes. Component of the PCAF complex, at least composed of TADA2L/ADA2, SUPT3H, TADA3L/ADA3, TAF5L/PAF65-beta, TAF6L/PAF65-alpha, TAF10/TAFII30, TAF12/TAFII20, TAF9/TAFII31 and TRRAP. Component of the TFTC-HAT complex, at least composed of TAF5L, TAF6L, TADA3L, SUPT3H/SPT3, TAF2/TAFII150, TAF4/TAFII135, TAF5/TAFII100, GCN5L2/GCN5, TAF10 and TRRAP. Component of the NuA4 histone acetyltransferase complex which contains the catalytic subunit KAT5/TIP60 and the subunits EP400, TRRAP/PAF400, BRD8/SMAP, EPC1, DMAP1/DNMAP1, RUVBL1/TIP49, RUVBL2, ING3, actin, ACTL6A/BAF53A, MORF4L1/MRG15, MORF4L2/MRGX, MRGBP, YEATS4/GAS41, VPS72/YL1 and MEAF6. Component of the STAGA complex, at least composed of SUPT3H, GCN5L2, SUPT7L, TAF5L, TAF6L, TADA3L, TAD1L, TAF10, TAF12, TRRAP and TAF9. The STAGA core complex is associated with a subcomplex required for histone deubiquitination composed of ATXN7L3, ENY2 and USP22. Component of the BAF53 complex, at least composed of BAF53A, RUVBL1, SMARCA4/BRG1, and TRRAP, which preferentially acetylates histone H4 (and H2A) within nucleosomes. Interacts with NPAT. Interaction with TELO2 and TTI1. Component of a SWR1-like complex. As to expression, expressed in the cochlea.

The protein localises to the nucleus. In terms of biological role, adapter protein, which is found in various multiprotein chromatin complexes with histone acetyltransferase activity (HAT), which gives a specific tag for epigenetic transcription activation. Component of the NuA4 histone acetyltransferase complex which is responsible for acetylation of nucleosomal histones H4 and H2A. Plays a central role in MYC transcription activation, and also participates in cell transformation by MYC. Required for p53/TP53-, E2F1- and E2F4-mediated transcription activation. Probably acts by linking transcription factors such as E1A, MYC or E2F1 to HAT complexes such as STAGA thereby allowing transcription activation. Probably not required in the steps following histone acetylation in processes of transcription activation. May be required for the mitotic checkpoint and normal cell cycle progression. Component of a SWR1-like complex that specifically mediates the removal of histone H2A.Z/H2AZ1 from the nucleosome. May play a role in the formation and maintenance of the auditory system. In Mus musculus (Mouse), this protein is Transformation/transcription domain-associated protein (Trrap).